Consider the following 137-residue polypeptide: BolA-like protein 1 (137 aa).

The residue at position 81 (Ser-81) is a Phosphoserine. A disordered region spans residues 115–137 (RENPQLDISPPCLGGSKKTRGTS).

The protein belongs to the BolA/IbaG family. Interacts with GLRX5.

The protein localises to the mitochondrion. Acts as a mitochondrial iron-sulfur (Fe-S) cluster assembly factor that facilitates (Fe-S) cluster insertion into a subset of mitochondrial proteins. Probably acts together with the monothiol glutaredoxin GLRX5. May protect cells against oxidative stress. The protein is BolA-like protein 1 (Bola1) of Mus musculus (Mouse).